The sequence spans 141 residues: Hemoglobin subunit alpha (141 aa).

Residues 1–141 (VLSPADKTNL…VSTVLTSKYR (141 aa)) form the Globin domain. At S3 the chain carries Phosphoserine. N6-succinyllysine is present on K7. Phosphothreonine is present on T8. K11 bears the N6-succinyllysine mark. Residue K16 is modified to N6-acetyllysine; alternate. K16 is subject to N6-succinyllysine; alternate. Phosphotyrosine is present on Y24. Position 40 is an N6-succinyllysine (K40). S49 carries the phosphoserine modification. H58 is an O2 binding site. H87 serves as a coordination point for heme b. At S102 the chain carries Phosphoserine. T108 carries the post-translational modification Phosphothreonine. The residue at position 124 (S124) is a Phosphoserine. Phosphothreonine occurs at positions 134 and 137. Phosphoserine is present on S138.

It belongs to the globin family. In terms of assembly, heterotetramer of two alpha chains and two beta chains. In terms of tissue distribution, red blood cells.

In terms of biological role, involved in oxygen transport from the lung to the various peripheral tissues. This Tamias striatus (Eastern chipmunk) protein is Hemoglobin subunit alpha.